Reading from the N-terminus, the 155-residue chain is SsrA-binding protein (155 aa).

Residues 135 to 155 (KRESLKRRQDQRDIQRAMKNY) are disordered.

This sequence belongs to the SmpB family.

It is found in the cytoplasm. Required for rescue of stalled ribosomes mediated by trans-translation. Binds to transfer-messenger RNA (tmRNA), required for stable association of tmRNA with ribosomes. tmRNA and SmpB together mimic tRNA shape, replacing the anticodon stem-loop with SmpB. tmRNA is encoded by the ssrA gene; the 2 termini fold to resemble tRNA(Ala) and it encodes a 'tag peptide', a short internal open reading frame. During trans-translation Ala-aminoacylated tmRNA acts like a tRNA, entering the A-site of stalled ribosomes, displacing the stalled mRNA. The ribosome then switches to translate the ORF on the tmRNA; the nascent peptide is terminated with the 'tag peptide' encoded by the tmRNA and targeted for degradation. The ribosome is freed to recommence translation, which seems to be the essential function of trans-translation. In Trichormus variabilis (strain ATCC 29413 / PCC 7937) (Anabaena variabilis), this protein is SsrA-binding protein.